The following is a 68-amino-acid chain: UPF0435 protein SA1696 (68 aa).

It belongs to the UPF0435 family.

The sequence is that of UPF0435 protein SA1696 from Staphylococcus aureus (strain N315).